A 123-amino-acid polypeptide reads, in one-letter code: Small ribosomal subunit protein uS12 (123 aa).

The segment at M1 to Q29 is disordered. Basic residues predominate over residues I8–S21. A 3-methylthioaspartic acid modification is found at D89.

This sequence belongs to the universal ribosomal protein uS12 family. In terms of assembly, part of the 30S ribosomal subunit. Contacts proteins S8 and S17. May interact with IF1 in the 30S initiation complex.

Its function is as follows. With S4 and S5 plays an important role in translational accuracy. Interacts with and stabilizes bases of the 16S rRNA that are involved in tRNA selection in the A site and with the mRNA backbone. Located at the interface of the 30S and 50S subunits, it traverses the body of the 30S subunit contacting proteins on the other side and probably holding the rRNA structure together. The combined cluster of proteins S8, S12 and S17 appears to hold together the shoulder and platform of the 30S subunit. The chain is Small ribosomal subunit protein uS12 from Chlamydia abortus (strain DSM 27085 / S26/3) (Chlamydophila abortus).